Reading from the N-terminus, the 415-residue chain is Gamma-glutamyl phosphate reductase (415 aa).

Belongs to the gamma-glutamyl phosphate reductase family.

The protein localises to the cytoplasm. The catalysed reaction is L-glutamate 5-semialdehyde + phosphate + NADP(+) = L-glutamyl 5-phosphate + NADPH + H(+). It participates in amino-acid biosynthesis; L-proline biosynthesis; L-glutamate 5-semialdehyde from L-glutamate: step 2/2. Catalyzes the NADPH-dependent reduction of L-glutamate 5-phosphate into L-glutamate 5-semialdehyde and phosphate. The product spontaneously undergoes cyclization to form 1-pyrroline-5-carboxylate. The sequence is that of Gamma-glutamyl phosphate reductase from Carboxydothermus hydrogenoformans (strain ATCC BAA-161 / DSM 6008 / Z-2901).